Reading from the N-terminus, the 458-residue chain is Argininosuccinate lyase (458 aa).

Belongs to the lyase 1 family. Argininosuccinate lyase subfamily.

It localises to the cytoplasm. The catalysed reaction is 2-(N(omega)-L-arginino)succinate = fumarate + L-arginine. It functions in the pathway amino-acid biosynthesis; L-arginine biosynthesis; L-arginine from L-ornithine and carbamoyl phosphate: step 3/3. This chain is Argininosuccinate lyase, found in Pseudoalteromonas atlantica (strain T6c / ATCC BAA-1087).